Consider the following 325-residue polypeptide: DNA-directed RNA polymerase subunit alpha (325 aa).

Positions 1–239 (MQQFLRYNIN…DHLKPLIDIN (239 aa)) are alpha N-terminal domain (alpha-NTD). Residues 255–325 (EKNKKLSIPI…ELYDLKLKNN (71 aa)) are alpha C-terminal domain (alpha-CTD).

This sequence belongs to the RNA polymerase alpha chain family. As to quaternary structure, homodimer. The RNAP catalytic core consists of 2 alpha, 1 beta, 1 beta' and 1 omega subunit. When a sigma factor is associated with the core the holoenzyme is formed, which can initiate transcription.

The catalysed reaction is RNA(n) + a ribonucleoside 5'-triphosphate = RNA(n+1) + diphosphate. DNA-dependent RNA polymerase catalyzes the transcription of DNA into RNA using the four ribonucleoside triphosphates as substrates. The chain is DNA-directed RNA polymerase subunit alpha from Mycoplasmoides gallisepticum (strain R(low / passage 15 / clone 2)) (Mycoplasma gallisepticum).